We begin with the raw amino-acid sequence, 506 residues long: ATP synthase subunit alpha, plastid (506 aa).

Position 170-177 (170-177 (GDRQTGKT)) interacts with ATP.

The protein belongs to the ATPase alpha/beta chains family. In terms of assembly, F-type ATPases have 2 components, CF(1) - the catalytic core - and CF(0) - the membrane proton channel. CF(1) has five subunits: alpha(3), beta(3), gamma(1), delta(1), epsilon(1). CF(0) has four main subunits: a, b, b' and c.

The protein localises to the plastid membrane. The enzyme catalyses ATP + H2O + 4 H(+)(in) = ADP + phosphate + 5 H(+)(out). In terms of biological role, produces ATP from ADP in the presence of a proton gradient across the membrane. The alpha chain is a regulatory subunit. The protein is ATP synthase subunit alpha, plastid of Prototheca wickerhamii.